A 60-amino-acid chain; its full sequence is Sperm protamine P1 (60 aa).

The segment at 1 to 60 (MARYRHSRSRSRSRYRRRRRRRSRYRSRRRRXRRRRRSRRGRRRRGYSRRRYSRRRRRRY) is disordered.

It belongs to the protamine P1 family. In terms of tissue distribution, testis.

It localises to the nucleus. Its subcellular location is the chromosome. Functionally, protamines substitute for histones in the chromatin of sperm during the haploid phase of spermatogenesis. They compact sperm DNA into a highly condensed, stable and inactive complex. The chain is Sperm protamine P1 (PRM1) from Petrogale concinna (Nabarlek).